The sequence spans 217 residues: Probable transaldolase (217 aa).

Lys83 (schiff-base intermediate with substrate) is an active-site residue.

The protein belongs to the transaldolase family. Type 3B subfamily.

It localises to the cytoplasm. It catalyses the reaction D-sedoheptulose 7-phosphate + D-glyceraldehyde 3-phosphate = D-erythrose 4-phosphate + beta-D-fructose 6-phosphate. It functions in the pathway carbohydrate degradation; pentose phosphate pathway; D-glyceraldehyde 3-phosphate and beta-D-fructose 6-phosphate from D-ribose 5-phosphate and D-xylulose 5-phosphate (non-oxidative stage): step 2/3. In terms of biological role, transaldolase is important for the balance of metabolites in the pentose-phosphate pathway. This Ruegeria sp. (strain TM1040) (Silicibacter sp.) protein is Probable transaldolase.